Reading from the N-terminus, the 117-residue chain is Large ribosomal subunit protein bL20c (117 aa).

It belongs to the bacterial ribosomal protein bL20 family.

It localises to the plastid. The protein localises to the chloroplast. Its function is as follows. Binds directly to 23S ribosomal RNA and is necessary for the in vitro assembly process of the 50S ribosomal subunit. It is not involved in the protein synthesizing functions of that subunit. This Manihot esculenta (Cassava) protein is Large ribosomal subunit protein bL20c.